We begin with the raw amino-acid sequence, 210 residues long: Synaptosomal-associated protein 23 (210 aa).

Met-1 is subject to N-acetylmethionine. Phosphoserine occurs at positions 5, 20, 23, and 34. The t-SNARE coiled-coil homology 1 domain occupies 14–76; that stretch reads HQVTDESLES…REAEKTLTEL (63 aa). Residues 23–76 adopt a coiled-coil conformation; it reads STRRILGLAIESQDAGIKTITMLDEQGEQLNRIEEGMDQINKDMREAEKTLTEL. Residues Cys-79, Cys-80, Cys-83, Cys-85, and Cys-87 are each lipidated (S-palmitoyl cysteine). Positions 104 to 135 are disordered; it reads GDGGDNSPSNVVSKQPSRITNGQPQQTTGAAS. Polar residues predominate over residues 109-133; that stretch reads NSPSNVVSKQPSRITNGQPQQTTGA. Residues Ser-110 and Ser-160 each carry the phosphoserine modification. The t-SNARE coiled-coil homology 2 domain maps to 145 to 207; the sequence is DAREDEMEEN…DIANTRAKKL (63 aa).

The protein belongs to the SNAP-25 family. Homotetramer (via coiled-coil domain), also forms heterotetramers with STX4 and VAMP3. Found in a complex with VAMP8 and STX1A. Found in a complex with VAMP8 and STX4 in pancreas. Interacts simultaneously with SNAPIN and SYN4. Interacts with STX1A. Interacts with STX12. Interacts tightly to multiple syntaxins and synaptobrevins/VAMPs. Interacts with ZDHHC13 (via ANK repeats). Interacts with ZDHHC17 (via ANK repeats). (Microbial infection) Targeted and hydrolyzed by C.botulinum neurotoxin type A (BoNT/A, botA) which hydrolyzes the 202-Thr-|-Arg-203 bond; the in vitro reaction is not highly efficient. Post-translationally, (Microbial infection) Targeted and hydrolyzed by C.botulinum neurotoxin type E (BoNT/E) which hydrolyzes the 185-Arg-|-Ile-186 bond; the in vitro reaction is more efficient than that of BoNT/A. Expressed in non-neuronal tissues.

It is found in the cell membrane. The protein localises to the synapse. The protein resides in the synaptosome. Essential component of the high affinity receptor for the general membrane fusion machinery and an important regulator of transport vesicle docking and fusion. This Mus musculus (Mouse) protein is Synaptosomal-associated protein 23 (Snap23).